The primary structure comprises 509 residues: NADH-quinone oxidoreductase subunit M (509 aa).

Residues 1–21 (MLLPWLILIPFIGGFLCWQTE) form a helical membrane-spanning segment. Over 22–29 (RFGVKVPR) the chain is Cytoplasmic. A helical membrane pass occupies residues 30-50 (WIALITMGLTLALSLQLWLQG). Over 51–82 (GYSLTQSAGIPQWQSEFDMPWIPRFGISIHLA) the chain is Periplasmic. Residues 83–103 (IDGLSLLMVVLTGLLGVLAVL) form a helical membrane-spanning segment. Over 104 to 121 (CSWKEIEKYQGFFHLNLM) the chain is Cytoplasmic. Residues 122-142 (WILGGVIGVFLAIDMFLFFFF) traverse the membrane as a helical segment. Topologically, residues 143-173 (WEMMLVPMYFLIALWGHKASDGKTRITAATK) are periplasmic. A helical membrane pass occupies residues 174-194 (FFIYTQASGLVMLIAILALVF). At 195-221 (VHYNATGVWTFNYEELLNTPMSSGVEY) the chain is on the cytoplasmic side. The chain crosses the membrane as a helical span at residues 222 to 242 (LLMLGFFIAFAVKMPVVPLHG). The Periplasmic portion of the chain corresponds to 243–258 (WLPDAHSQAPTAGSVD). The chain crosses the membrane as a helical span at residues 259–279 (LAGILLKTAAYGLLRFSLPLF). At 280-285 (PNASAE) the chain is on the cytoplasmic side. Residues 286–306 (FAPIAMWLGVIGIFYGAWMAF) form a helical membrane-spanning segment. The Periplasmic portion of the chain corresponds to 307–313 (AQTDIKR). The chain crosses the membrane as a helical span at residues 314 to 334 (LIAYTSVSHMGFVLIAIYTGS). Topologically, residues 335 to 339 (QLAYQ) are cytoplasmic. A helical membrane pass occupies residues 340–360 (GAVIQMIAHGLSAAGLFILCG). The Periplasmic portion of the chain corresponds to 361–382 (QLYERIHTRDMRMMGGLWSKMK). 2 helical membrane passes run 383–403 (WLPALSLFFAVATLGMPGTGN) and 404–424 (FVGEFMILFGSFQVVPVITVI). Position 425 (Ser425) is a topological domain, periplasmic. The helical transmembrane segment at 426-446 (TFGLVFASVYSLAMLHRAYFG) threads the bilayer. Residues 447–464 (KAKSQIASQELPGMSLRE) lie on the Cytoplasmic side of the membrane. The chain crosses the membrane as a helical span at residues 465–485 (LFMILLLVVLLVLLGFYPQPI). At 486 to 509 (LDTSHSAIGNIQQWFVNSVTTTRP) the chain is on the periplasmic side.

Belongs to the complex I subunit 4 family. In terms of assembly, composed of 13 different subunits. Subunits NuoA, H, J, K, L, M, N constitute the membrane sector of the complex.

The protein resides in the cell inner membrane. The enzyme catalyses a quinone + NADH + 5 H(+)(in) = a quinol + NAD(+) + 4 H(+)(out). Functionally, NDH-1 shuttles electrons from NADH, via FMN and iron-sulfur (Fe-S) centers, to quinones in the respiratory chain. The immediate electron acceptor for the enzyme in this species is believed to be ubiquinone. Couples the redox reaction to proton translocation (for every two electrons transferred, four hydrogen ions are translocated across the cytoplasmic membrane), and thus conserves the redox energy in a proton gradient. This Escherichia coli O157:H7 protein is NADH-quinone oxidoreductase subunit M (nuoM).